A 248-amino-acid polypeptide reads, in one-letter code: Glutamine-binding periplasmic protein (248 aa).

An N-terminal signal peptide occupies residues Met-1 to Ala-22.

The protein belongs to the bacterial solute-binding protein 3 family.

It localises to the periplasm. Involved in a glutamine-transport system GlnHPQ. In Escherichia coli O157:H7, this protein is Glutamine-binding periplasmic protein (glnH).